The chain runs to 572 residues: Squalene synthase (572 aa).

A run of 2 helical transmembrane segments spans residues 316–336 (SVFN…ELMF) and 492–512 (FFLI…LITW).

Belongs to the phytoene/squalene synthase family. In terms of assembly, monomer. Mg(2+) serves as cofactor.

The protein resides in the endoplasmic reticulum membrane. The enzyme catalyses 2 (2E,6E)-farnesyl diphosphate + NADPH + H(+) = squalene + 2 diphosphate + NADP(+). It carries out the reaction 2 (2E,6E)-farnesyl diphosphate + NADH + H(+) = squalene + 2 diphosphate + NAD(+). Its pathway is terpene metabolism; lanosterol biosynthesis; lanosterol from farnesyl diphosphate: step 1/3. Catalyzes the condensation of 2 two farnesyl pyrophosphate moieties to form squalene. It is the first committed enzyme of the sterol biosynthesis pathway. Required for the biosynthesis of ergosterol. In Mycosarcoma maydis (Corn smut fungus), this protein is Squalene synthase (ERG9).